A 254-amino-acid polypeptide reads, in one-letter code: Keratin-associated protein 24-1 (254 aa).

6 repeat units span residues 193–202, 203–212, 213–222, 223–232, 233–242, and 243–252. The segment at 193–252 is 6 X 10 AA repeats of Y-[ILR]-[SVPC]-[NRTS]-[SNTG]-X-[QHRP]-[PSY]-[QSL]-[SRK]; it reads YISNSCQPQSYLVRNYHYSSYRPTSCRPLSYLSRSFRSLSYIPSTFPPLRYLCSGSRPLK.

It belongs to the PMG family. Interacts with hair keratins. In terms of tissue distribution, specific expression in the middle/upper hair cuticle.

In terms of biological role, in the hair cortex, hair keratin intermediate filaments are embedded in an interfilamentous matrix, consisting of hair keratin-associated proteins (KRTAP), which are essential for the formation of a rigid and resistant hair shaft through their extensive disulfide bond cross-linking with abundant cysteine residues of hair keratins. The matrix proteins include the high-sulfur and high-glycine-tyrosine keratins. This chain is Keratin-associated protein 24-1 (KRTAP24-1), found in Homo sapiens (Human).